A 416-amino-acid chain; its full sequence is Protein-glutamine gamma-glutamyltransferase (416 aa).

A signal peptide (tat-type signal) is located at residues 1–29 (MHKRRRLLAFATVGAVICTAGFTPSVSQA). The propeptide occupies 30-85 (ASSGDGEEKGSYAETHGLTADDVESINALNERALTLGQPGKPPKELPPSASAPSRA). Residues 64–103 (TLGQPGKPPKELPPSASAPSRAPSDDRETPPAEPLDRMPE) are disordered. Residues 76–85 (PPSASAPSRA) show a composition bias toward low complexity. Positions 86-103 (PSDDRETPPAEPLDRMPE) are enriched in basic and acidic residues. Residue Cys-149 is part of the active site. Residues 290–331 (GQDQRGSSDKRKYGDPEAFRPDQGTGLVDMSKDRSIPRSPAK) are disordered. Basic and acidic residues predominate over residues 295–309 (GSSDKRKYGDPEAFR). Catalysis depends on residues Asp-340 and His-359.

It belongs to the bacterial TGase family. Post-translationally, predicted to be exported by the Tat system. The position of the signal peptide cleavage has not been experimentally proven.

The catalysed reaction is L-glutaminyl-[protein] + L-lysyl-[protein] = [protein]-L-lysyl-N(6)-5-L-glutamyl-[protein] + NH4(+). Catalyzes the cross-linking of proteins and the conjugation of polyamines to proteins. The chain is Protein-glutamine gamma-glutamyltransferase from Streptomyces cinnamoneus (Streptoverticillium cinnamoneum).